A 302-amino-acid chain; its full sequence is tRNA dimethylallyltransferase (302 aa).

9 to 16 contributes to the ATP binding site; the sequence is GATATGKS. Substrate is bound at residue 11–16; it reads TATGKS. The segment at 34–37 is interaction with substrate tRNA; that stretch reads DSRQ.

Belongs to the IPP transferase family. In terms of assembly, monomer. Mg(2+) serves as cofactor.

The enzyme catalyses adenosine(37) in tRNA + dimethylallyl diphosphate = N(6)-dimethylallyladenosine(37) in tRNA + diphosphate. Its function is as follows. Catalyzes the transfer of a dimethylallyl group onto the adenine at position 37 in tRNAs that read codons beginning with uridine, leading to the formation of N6-(dimethylallyl)adenosine (i(6)A). The polypeptide is tRNA dimethylallyltransferase (Nostoc punctiforme (strain ATCC 29133 / PCC 73102)).